The sequence spans 115 residues: Evasin P1181 (115 aa).

The N-terminal stretch at M1 to L25 is a signal peptide. Intrachain disulfides connect C38-C58, C54-C94, C70-C99, and C89-C108. N-linked (GlcNAc...) asparagine glycans are attached at residues N45, N72, and N103.

The protein resides in the secreted. Salivary chemokine-binding protein which binds to host chemokines CCL3 and CCL4. In Amblyomma maculatum (Gulf Coast tick), this protein is Evasin P1181.